Reading from the N-terminus, the 178-residue chain is MKRALFPGRFQPPHWGHVYAIREVLKEVDELVVAVGSAQFNYIAKDPFTAGERIWMLREALREAGVDLSRVCTIPIPNVENNLEWLGRVKSYAPPFQVVYTGNPYVALLFREAGYEVRQQPMYQRERYSSTRVRELLMRGDPQWEELVPRSVAEIIKAIGGAERLRIAAAGEAEPHRW.

The protein belongs to the archaeal NMN adenylyltransferase family.

It is found in the cytoplasm. It carries out the reaction beta-nicotinamide D-ribonucleotide + ATP + H(+) = diphosphate + NAD(+). The protein operates within cofactor biosynthesis; NAD(+) biosynthesis; NAD(+) from nicotinamide D-ribonucleotide: step 1/1. This is Nicotinamide-nucleotide adenylyltransferase from Pyrobaculum neutrophilum (strain DSM 2338 / JCM 9278 / NBRC 100436 / V24Sta) (Thermoproteus neutrophilus).